Consider the following 89-residue polypeptide: Protein PerC (89 aa).

In terms of biological role, transcriptional activator of eaeA/bfpA expression in enteropathogenic E.coli. The polypeptide is Protein PerC (perC) (Escherichia coli O111:H-).